The following is a 317-amino-acid chain: Ribosomal RNA small subunit methyltransferase H (317 aa).

S-adenosyl-L-methionine-binding positions include 39–41 (GGH), Asp59, Phe83, Asp104, and Gln111.

Belongs to the methyltransferase superfamily. RsmH family.

The protein localises to the cytoplasm. The enzyme catalyses cytidine(1402) in 16S rRNA + S-adenosyl-L-methionine = N(4)-methylcytidine(1402) in 16S rRNA + S-adenosyl-L-homocysteine + H(+). Its function is as follows. Specifically methylates the N4 position of cytidine in position 1402 (C1402) of 16S rRNA. The chain is Ribosomal RNA small subunit methyltransferase H from Paraburkholderia xenovorans (strain LB400).